Consider the following 89-residue polypeptide: Small ribosomal subunit protein uS15 (89 aa).

The disordered stretch occupies residues 1 to 23 (MALTKERTASVVQQYGSGEKDTG).

The protein belongs to the universal ribosomal protein uS15 family. Part of the 30S ribosomal subunit. Forms a bridge to the 50S subunit in the 70S ribosome, contacting the 23S rRNA.

Its function is as follows. One of the primary rRNA binding proteins, it binds directly to 16S rRNA where it helps nucleate assembly of the platform of the 30S subunit by binding and bridging several RNA helices of the 16S rRNA. Forms an intersubunit bridge (bridge B4) with the 23S rRNA of the 50S subunit in the ribosome. The sequence is that of Small ribosomal subunit protein uS15 from Treponema pallidum (strain Nichols).